Reading from the N-terminus, the 161-residue chain is Putative acetyltransferase SAR0816 (161 aa).

This sequence belongs to the transferase hexapeptide repeat family.

This chain is Putative acetyltransferase SAR0816, found in Staphylococcus aureus (strain MRSA252).